The sequence spans 548 residues: Aromatic ammonia-lyase (548 aa).

Y55 (proton donor/acceptor) is an active-site residue. Residues 144 to 146 constitute a cross-link (5-imidazolinone (Ala-Gly)); the sequence is ASG. At S145 the chain carries 2,3-didehydroalanine (Ser). Residues N200, Q288, R294, N324, K396, E425, and N428 each coordinate (E)-cinnamate.

The protein belongs to the PAL/histidase family. In terms of assembly, homotetramer. Contains an active site 4-methylidene-imidazol-5-one (MIO), which is formed autocatalytically by cyclization and dehydration of residues Ala-Ser-Gly.

The enzyme catalyses L-phenylalanine = (E)-cinnamate + NH4(+). The catalysed reaction is L-tyrosine = (E)-4-coumarate + NH4(+). It carries out the reaction 3,4-dimethoxy-L-phenylalanine = 3,4-dimethoxy-(E)-cinnamate + NH4(+). Its pathway is phenylpropanoid metabolism; trans-cinnamate biosynthesis; trans-cinnamate from L-phenylalanine: step 1/1. Functionally, aromatic ammonia-lyase (AAL) that shows reduced activity to catalyze the non-oxidative ammonia elimination from the canonical AAL substrates L-Phe and L-Tyr, contrasted by its pronounced efficiency towards substrates with electron-donor aromatic substituents such as 3,4-dimethoxy-L-phenylalanine. Is also able to catalyze the reverse reaction in vitro, i.e. the ammonia addition reaction to cinnamate derivatives, producing enantiopure phenylalanine derivatives. Shows no activity with L-His. This Loktanella atrilutea protein is Aromatic ammonia-lyase.